The following is a 41-amino-acid chain: Large ribosomal subunit protein bL36 (41 aa).

It belongs to the bacterial ribosomal protein bL36 family.

The polypeptide is Large ribosomal subunit protein bL36 (rpmJ) (Agrobacterium fabrum (strain C58 / ATCC 33970) (Agrobacterium tumefaciens (strain C58))).